The sequence spans 221 residues: Histone H1C (221 aa).

Composition is skewed to low complexity over residues 1 to 11 and 27 to 44; these read MTETAATETTP and KKAA…PSAS. Disordered stretches follow at residues 1-44 and 123-221; these read MTET…PSAS and AKKK…AAKK. An H15 domain is found at 39-112; the sequence is SGPSASELIV…GASGSFKLNK (74 aa). 2 stretches are compositionally biased toward basic residues: residues 123 to 150 and 158 to 221; these read AKKK…KPKK and SPKK…AAKK.

The protein belongs to the histone H1/H5 family.

The protein localises to the nucleus. Its subcellular location is the chromosome. Its function is as follows. Histones H1 are necessary for the condensation of nucleosome chains into higher-order structures. The chain is Histone H1C from Xenopus laevis (African clawed frog).